Reading from the N-terminus, the 143-residue chain is Endoribonuclease YbeY (143 aa).

Zn(2+)-binding residues include histidine 106, histidine 110, and histidine 116.

It belongs to the endoribonuclease YbeY family. It depends on Zn(2+) as a cofactor.

The protein localises to the cytoplasm. Single strand-specific metallo-endoribonuclease involved in late-stage 70S ribosome quality control and in maturation of the 3' terminus of the 16S rRNA. The polypeptide is Endoribonuclease YbeY (Petrotoga mobilis (strain DSM 10674 / SJ95)).